The primary structure comprises 293 residues: Chorion protein S36 (293 aa).

The first 20 residues, 1–20, serve as a signal peptide directing secretion; it reads MQLGLWFGLFAVAAAPLVSA. The span at 235 to 253 shows a compositional bias: polar residues; it reads QSYGQPQAYNQPQAYSQPQ. A disordered region spans residues 235 to 293; it reads QSYGQPQAYNQPQAYSQPQSYGNSGSSGAGNSGPSSDSYAAGAETPLYASPAPYGSPSY.

Belongs to the chorion protein S36 family.

The protein resides in the secreted. Chorion membrane (egg shell) protein; protects the egg from the environment. The protein is Chorion protein S36 (Cp36) of Drosophila virilis (Fruit fly).